Consider the following 368-residue polypeptide: Cyclic di-GMP phosphodiesterase TM_0186 (368 aa).

In terms of domain architecture, Response regulatory spans 2 to 114 (TVLIVEDDDI…LLRLKITHAL (113 aa)). At Asp-49 the chain carries 4-aspartylphosphate. In terms of domain architecture, HD-GYP spans 148 to 345 (YEDFLFEVLE…ITDVYRREKD (198 aa)). Positions 169, 173, 205, 206, 234, 260, 261, and 289 each coordinate a divalent metal cation. A disordered region spans residues 341-368 (RREKDEDTSHNGGRSHQSSPGEGVEGIR). Positions 350 to 360 (HNGGRSHQSSP) are enriched in polar residues.

It carries out the reaction 3',3'-c-di-GMP + 2 H2O = 2 GMP + 2 H(+). Its activity is regulated as follows. Can function in vivo with either divalent iron or manganese occupying di- and trimetal sites. Dimetal is necessary and sufficient to catalyze conversion of c-di-GMP to pGpG, but conversion of pGpG to GMP requires an occupied trimetal site. In terms of biological role, phosphodiesterase (PDE) that catalyzes the hydrolysis of cyclic diguanylate (c-di-GMP) to GMP. Hydrolyzes c-di-GMP to GMP in a two-step reaction, via the linear intermediate 5'-phosphoguanylyl(3'-&gt;5')guanosine (pGpG). The chain is Cyclic di-GMP phosphodiesterase TM_0186 from Thermotoga maritima (strain ATCC 43589 / DSM 3109 / JCM 10099 / NBRC 100826 / MSB8).